The chain runs to 283 residues: Putative 4-diphosphocytidyl-2-C-methyl-D-erythritol kinase (283 aa).

Lys-10 is an active-site residue. 94–104 contacts ATP; the sequence is PVCAGLGGGST. Asp-136 is a catalytic residue.

This sequence belongs to the GHMP kinase family. IspE subfamily.

It catalyses the reaction 4-CDP-2-C-methyl-D-erythritol + ATP = 4-CDP-2-C-methyl-D-erythritol 2-phosphate + ADP + H(+). In terms of biological role, catalyzes the phosphorylation of the position 2 hydroxy group of 4-diphosphocytidyl-2C-methyl-D-erythritol. This chain is Putative 4-diphosphocytidyl-2-C-methyl-D-erythritol kinase, found in Streptococcus agalactiae serotype III (strain NEM316).